A 182-amino-acid polypeptide reads, in one-letter code: Adenylate kinase (182 aa).

G12–T17 lines the ATP pocket. Residues S32–V61 form an NMP region. Residues T33, R38, E59–V61, G85–R88, and Q92 contribute to the AMP site. Positions E126 to D132 are LID. R127 is an ATP binding site. R129 and R140 together coordinate AMP. Residue A168 participates in ATP binding.

Belongs to the adenylate kinase family. In terms of assembly, monomer.

It is found in the cytoplasm. The enzyme catalyses AMP + ATP = 2 ADP. It functions in the pathway purine metabolism; AMP biosynthesis via salvage pathway; AMP from ADP: step 1/1. Its function is as follows. Catalyzes the reversible transfer of the terminal phosphate group between ATP and AMP. Plays an important role in cellular energy homeostasis and in adenine nucleotide metabolism. The chain is Adenylate kinase from Prochlorococcus marinus (strain NATL2A).